The following is a 222-amino-acid chain: UPF0128 protein TK2294 (222 aa).

It belongs to the UPF0128 family.

This chain is UPF0128 protein TK2294, found in Thermococcus kodakarensis (strain ATCC BAA-918 / JCM 12380 / KOD1) (Pyrococcus kodakaraensis (strain KOD1)).